A 92-amino-acid chain; its full sequence is Actobindin-A (92 aa).

2 disordered regions span residues 1–33 and 54–92; these read MSAPNPLLAEINKGADLKHTETQDKSAPKIGSD and LKHAETDDKSAPKINENTTIKPNNHSALLGEIKAKAADS. 2 consecutive WH2 domains span residues 3 to 20 and 40 to 57; these read APNPLLAEINKGADLKHT and DHASLLSEVEQGAKLKHA. Basic and acidic residues-rich tracts occupy residues 13 to 33 and 54 to 64; these read KGADLKHTETQDKSAPKIGSD and LKHAETDDKSA. The segment covering 68 to 79 has biased composition (polar residues); sequence NENTTIKPNNHS.

Monomer.

Functionally, is able to bind two actin monomers at high concentrations of G-actin. Inhibits actin polymerization by sequestering G-actin and stabilizing actin dimers. This Dictyostelium discoideum (Social amoeba) protein is Actobindin-A (abnA).